The chain runs to 240 residues: UDP-2,3-diacylglucosamine hydrolase (240 aa).

The Mn(2+) site is built by Asp-8, His-10, Asp-41, Asn-78, and His-113. Position 78–79 (78–79 (NR)) interacts with substrate. Substrate is bound by residues Asp-121, Ser-159, Asn-163, Lys-166, and His-194. Residues His-194 and His-196 each contribute to the Mn(2+) site.

This sequence belongs to the LpxH family. Mn(2+) is required as a cofactor.

It localises to the cell inner membrane. It carries out the reaction UDP-2-N,3-O-bis[(3R)-3-hydroxytetradecanoyl]-alpha-D-glucosamine + H2O = 2-N,3-O-bis[(3R)-3-hydroxytetradecanoyl]-alpha-D-glucosaminyl 1-phosphate + UMP + 2 H(+). It participates in glycolipid biosynthesis; lipid IV(A) biosynthesis; lipid IV(A) from (3R)-3-hydroxytetradecanoyl-[acyl-carrier-protein] and UDP-N-acetyl-alpha-D-glucosamine: step 4/6. Hydrolyzes the pyrophosphate bond of UDP-2,3-diacylglucosamine to yield 2,3-diacylglucosamine 1-phosphate (lipid X) and UMP by catalyzing the attack of water at the alpha-P atom. Involved in the biosynthesis of lipid A, a phosphorylated glycolipid that anchors the lipopolysaccharide to the outer membrane of the cell. This chain is UDP-2,3-diacylglucosamine hydrolase, found in Shewanella baltica (strain OS185).